The primary structure comprises 394 residues: ATP phosphoribosyltransferase regulatory subunit (394 aa).

Belongs to the class-II aminoacyl-tRNA synthetase family. HisZ subfamily. As to quaternary structure, heteromultimer composed of HisG and HisZ subunits.

Its subcellular location is the cytoplasm. It functions in the pathway amino-acid biosynthesis; L-histidine biosynthesis; L-histidine from 5-phospho-alpha-D-ribose 1-diphosphate: step 1/9. In terms of biological role, required for the first step of histidine biosynthesis. May allow the feedback regulation of ATP phosphoribosyltransferase activity by histidine. In Saccharophagus degradans (strain 2-40 / ATCC 43961 / DSM 17024), this protein is ATP phosphoribosyltransferase regulatory subunit.